Here is a 179-residue protein sequence, read N- to C-terminus: MPSSSALLCCLVFLAGVAASRDASAPSDSSCTHFSNSLPLMLRELRTAFSRVKNFFQMKDQLDSMLLTQSLLDDFKGYLGCQALSEMIQFYLEEVMPQAENHGPEIKEHVNSLGEKLKTLRLRLRRCHRFLPCENKSKAVEQVKSVFSKLQERGVYKAMSEFDIFINYIETYTTMKMKN.

An N-terminal signal peptide occupies residues methionine 1–alanine 19. Disulfide bonds link cysteine 31-cysteine 127 and cysteine 81-cysteine 133. N-linked (GlcNAc...) asparagine glycosylation occurs at asparagine 135.

This sequence belongs to the IL-10 family. Homodimer. Interacts with IL10RA and IL10RB.

It is found in the secreted. Major immune regulatory cytokine that acts on many cells of the immune system where it has profound anti-inflammatory functions, limiting excessive tissue disruption caused by inflammation. Mechanistically, IL10 binds to its heterotetrameric receptor comprising IL10RA and IL10RB leading to JAK1 and STAT2-mediated phosphorylation of STAT3. In turn, STAT3 translocates to the nucleus where it drives expression of anti-inflammatory mediators. Targets antigen-presenting cells (APCs) such as macrophages and monocytes and inhibits their release of pro-inflammatory cytokines including granulocyte-macrophage colony-stimulating factor /GM-CSF, granulocyte colony-stimulating factor/G-CSF, IL-1 alpha, IL-1 beta, IL-6, IL-8 and TNF-alpha. Also interferes with antigen presentation by reducing the expression of MHC-class II and co-stimulatory molecules, thereby inhibiting their ability to induce T cell activation. In addition, controls the inflammatory response of macrophages by reprogramming essential metabolic pathways including mTOR signaling. The sequence is that of Interleukin-10 (IL10) from Cervus elaphus (Red deer).